Reading from the N-terminus, the 559-residue chain is Extracellular matrix protein 1 (559 aa).

Residues 1 to 19 (MGTVSRAALILACLALASA) form the signal peptide. Repeat copies occupy residues 170 to 298 (HCQQ…RPDY) and 302 to 424 (PCPV…YPNY). The interval 170 to 424 (HCQQGRRGVW…FAHLAPYPNY (255 aa)) is 2 X approximate repeats. An N-linked (GlcNAc...) asparagine glycan is attached at N373. N-linked (GlcNAc...) (high mannose) asparagine glycosylation is found at N463 and N535. Residues 535 to 559 (NATGLGEQGPTRGTDANPAPGSKEE) form a disordered region. Phosphoserine is present on S556.

In terms of assembly, interacts (via C-terminus) with HSPG2 (via C-terminus). Interacts with EFEMP1/FBLN3 and LAMB3. Interacts with MMP9. Expressed in the surrounding connective tissues of developing long bones, but not in the cartilage. The long isoform is expressed in a number of tissues including liver, heart and lungs. The short isoform is expressed in skin and cartilage-containing tissues such as tail and front paw. No expression is found in brain.

The protein localises to the secreted. Its subcellular location is the extracellular space. The protein resides in the extracellular matrix. Functionally, involved in endochondral bone formation as negative regulator of bone mineralization. Stimulates the proliferation of endothelial cells and promotes angiogenesis. Inhibits MMP9 proteolytic activity. The chain is Extracellular matrix protein 1 (Ecm1) from Mus musculus (Mouse).